The primary structure comprises 50 residues: Nosiheptide precursor (50 aa).

A cross-link (thiazole-4-carboxylic acid (Ser-Cys)) is located at residues 38 to 39 (SC). The segment at residues 38–46 (SCTTCECCC) is a cross-link (3-hydroxypyridine-2,5-dicarboxylic acid (Ser-Cys) (with S-47)). A cross-link (3-hydroxypyridine-2,5-dicarboxylic acid (Ser-Ser) (with C-46)) is located at residues 38–47 (SCTTCECCCS). Residues 41-42 (TC) constitute a cross-link (thiazole-4-carboxylic acid (Thr-Cys)). At E43 the chain carries 4-hydroxyglutamate. The segment at residues 43–44 (EC) is a cross-link (thiazole-4-carboxylic acid (Glu-Cys)). Positions 43–45 (ECC) form a cross-link, 2-(cystein-S-ylcarbonyl)-3-methyl-4-(glutam-5-yloxy)methylindole (Glu-Cys). A cross-link (thiazole-4-carboxylic acid (Cys-Cys)) is located at residues 45–46 (CC). The segment at residues 47 to 48 (SC) is a cross-link (thiazole-4-carboxylic acid (Ser-Cys)). S49 bears the 2,3-didehydroalanine (Ser) mark. Serine amide; atypical is present on S49.

Belongs to the thiocillin family. In terms of processing, the amidation of Ser-49 is produced by the oxidative cleavage of Ser-50 rather than of a glycine, as in eukaryotes.

In terms of biological role, inhibits bacterial protein biosynthesis by binding to ribosomes. Specifically, binds to the complex of 23S rRNA and ribosomal protein L11 (RPLK) in the 50S ribosomal subunit. While allowing a weak binding of elongation factor G (EF-G) to the ribosome and subsequent GTP-hydrolysis, probably impairs conformational changes in both the ribosome and EF-G which are necessary for translocation. In vitro, inhibits Gram-positive bacteria S.aureus strain 209P (MIC=0.0009 ug/ml), S.aureus strain 133 (MIC=0.0019 ug/ml), S.aureus strain B3 (MIC=0.003 ug/ml), S.aureus strain Hb (MIC=0.003 ug/ml), M.citreus strain ATCC 8411 (MIC=0.0038 ug/ml), M.lysodeikticus strain ATCC 4698 (MIC=0.003 ug/ml), S.lutea strain ATCC 9341 (MIC=0.0011 ug/ml), S.faecalis strain ATCC 9790 (MIC=0.0007 ug/ml), S.viridans (MIC=0.0065 ug/ml), S.pyogenes hemolyticus strain Dig7 (MIC=0.00028 ug/ml), D.pneumoniae strain Til (MIC=0.00015 ug/ml), N.catrrhalis (MIC=0.0017 ug/ml), L.casei strain ATCC 6633 (MIC=0.003 ug/ml), B.cereus strain ATCC 6630 (MIC=0.0071 ug/ml) and various isolates of L.monocytogenes. In vitro, inhibits Gram-negative bacterium P.multocida strain A125 (MIC=0.0024 ug/ml) but not M.smegmatis strain ATCC 6630, S.typhimurium, A.aerogenes strain ATCC 8308, P.vulgaris, K.pneumoniae strain ATCC 10031, S.marcescens strain A476, P.aeruginosa strain Bass or B.bronchiseptica strain CN387. Does not inhibit Gram-negative bacterium E.coli strain ATCC 9637 but does inhibit purified ribosomes from E.coli. In vivo, has no systemic effect in mice infected with staphylococci or streptococci when applied orally or subcutaneously. Has a local effect in mice infected subcutaneously or intraperitoneally with staphylococci when applied immediately afterwards. Is not toxic to mice. This chain is Nosiheptide precursor, found in Streptomyces actuosus.